A 236-amino-acid chain; its full sequence is Biosynthetic peptidoglycan transglycosylase (236 aa).

The helical transmembrane segment at 12-31 threads the bilayer; sequence ALLWFVAGSIVLVLVFRWVP.

The protein belongs to the glycosyltransferase 51 family.

It is found in the cell inner membrane. The enzyme catalyses [GlcNAc-(1-&gt;4)-Mur2Ac(oyl-L-Ala-gamma-D-Glu-L-Lys-D-Ala-D-Ala)](n)-di-trans,octa-cis-undecaprenyl diphosphate + beta-D-GlcNAc-(1-&gt;4)-Mur2Ac(oyl-L-Ala-gamma-D-Glu-L-Lys-D-Ala-D-Ala)-di-trans,octa-cis-undecaprenyl diphosphate = [GlcNAc-(1-&gt;4)-Mur2Ac(oyl-L-Ala-gamma-D-Glu-L-Lys-D-Ala-D-Ala)](n+1)-di-trans,octa-cis-undecaprenyl diphosphate + di-trans,octa-cis-undecaprenyl diphosphate + H(+). It participates in cell wall biogenesis; peptidoglycan biosynthesis. Its function is as follows. Peptidoglycan polymerase that catalyzes glycan chain elongation from lipid-linked precursors. This is Biosynthetic peptidoglycan transglycosylase from Pseudomonas putida (strain ATCC 700007 / DSM 6899 / JCM 31910 / BCRC 17059 / LMG 24140 / F1).